A 249-amino-acid polypeptide reads, in one-letter code: 3-deoxy-D-manno-octulosonic acid kinase (249 aa).

The active site involves D175.

The protein belongs to the protein kinase superfamily. KdkA/RfaP family.

It is found in the cell inner membrane. The enzyme catalyses an alpha-Kdo-(2-&gt;6)-lipid IVA + ATP = a 4-O-phospho-alpha-Kdo-(2-&gt;6)-lipid IVA + ADP + H(+). Its pathway is bacterial outer membrane biogenesis; LPS core biosynthesis. Functionally, catalyzes the ATP-dependent phosphorylation of the 3-deoxy-D-manno-octulosonic acid (Kdo) residue in Kdo-lipid IV(A) at the 4-OH position. The protein is 3-deoxy-D-manno-octulosonic acid kinase of Xylella fastidiosa (strain M12).